Reading from the N-terminus, the 140-residue chain is Large ribosomal subunit protein uL11 (140 aa).

The protein belongs to the universal ribosomal protein uL11 family. As to quaternary structure, part of the ribosomal stalk of the 50S ribosomal subunit. Interacts with L10 and the large rRNA to form the base of the stalk. L10 forms an elongated spine to which L12 dimers bind in a sequential fashion forming a multimeric L10(L12)X complex. In terms of processing, one or more lysine residues are methylated.

Forms part of the ribosomal stalk which helps the ribosome interact with GTP-bound translation factors. The chain is Large ribosomal subunit protein uL11 from Symbiobacterium thermophilum (strain DSM 24528 / JCM 14929 / IAM 14863 / T).